Reading from the N-terminus, the 284-residue chain is MTATIIDGKETAKEKRGQLAKEVEELKKQGVTPGLAVILIGDDPASLSYVRGKKKAAEAMGIRFQLDHFDASFTEQELLEVIDQYNQNDDFHGILVQLPLPDHISEQAVIERISPEKDVDGFHPLNVGKMLLGEDTFLPCTPAGIVELLKKTEIDLSGKEVVVVGRSNIVGKPVGQLLLNENATVTYCHSRTADITAHTKKADILIVAVGKANFIKADQIKEGAVVIDVGVNRLDNGKLAGDVDFEEAKEKASYITPVPGGVGPMTITMLAHNTVKSAKRTIQL.

NADP(+) contacts are provided by residues 165-167 (GRS), Ser-190, and Val-231.

It belongs to the tetrahydrofolate dehydrogenase/cyclohydrolase family. In terms of assembly, homodimer.

The enzyme catalyses (6R)-5,10-methylene-5,6,7,8-tetrahydrofolate + NADP(+) = (6R)-5,10-methenyltetrahydrofolate + NADPH. The catalysed reaction is (6R)-5,10-methenyltetrahydrofolate + H2O = (6R)-10-formyltetrahydrofolate + H(+). It functions in the pathway one-carbon metabolism; tetrahydrofolate interconversion. Its function is as follows. Catalyzes the oxidation of 5,10-methylenetetrahydrofolate to 5,10-methenyltetrahydrofolate and then the hydrolysis of 5,10-methenyltetrahydrofolate to 10-formyltetrahydrofolate. The protein is Bifunctional protein FolD of Bacillus licheniformis (strain ATCC 14580 / DSM 13 / JCM 2505 / CCUG 7422 / NBRC 12200 / NCIMB 9375 / NCTC 10341 / NRRL NRS-1264 / Gibson 46).